An 89-amino-acid polypeptide reads, in one-letter code: Small ribosomal subunit protein uS15 (89 aa).

A disordered region spans residues 1-23; it reads MTLNTEAKQKIINKHQTHGTDTG.

Belongs to the universal ribosomal protein uS15 family. Part of the 30S ribosomal subunit. Forms a bridge to the 50S subunit in the 70S ribosome, contacting the 23S rRNA.

In terms of biological role, one of the primary rRNA binding proteins, it binds directly to 16S rRNA where it helps nucleate assembly of the platform of the 30S subunit by binding and bridging several RNA helices of the 16S rRNA. Functionally, forms an intersubunit bridge (bridge B4) with the 23S rRNA of the 50S subunit in the ribosome. This chain is Small ribosomal subunit protein uS15, found in Prochlorococcus marinus (strain SARG / CCMP1375 / SS120).